Here is a 170-residue protein sequence, read N- to C-terminus: Fluoride-specific ion channel FluC 2 (170 aa).

4 helical membrane-spanning segments follow: residues 8-28 (ALVF…TVWI), 55-75 (IALL…VGMI), 84-104 (TFWG…AAAV), and 114-134 (ILIG…AAAM). 2 residues coordinate Na(+): G92 and T95.

This sequence belongs to the fluoride channel Fluc/FEX (TC 1.A.43) family.

The protein resides in the cell membrane. The enzyme catalyses fluoride(in) = fluoride(out). Na(+) is not transported, but it plays an essential structural role and its presence is essential for fluoride channel function. In terms of biological role, fluoride-specific ion channel. Important for reducing fluoride concentration in the cell, thus reducing its toxicity. The protein is Fluoride-specific ion channel FluC 2 of Corynebacterium jeikeium (strain K411).